The chain runs to 1436 residues: Gag-Pol polyprotein (1436 aa).

Residue glycine 2 is the site of N-myristoyl glycine; by host attachment. The tract at residues 7–31 (VLSGGKLDKWEKIRLRPRGKKRYKL) is interaction with Gp41. Residues 8 to 43 (LSGGKLDKWEKIRLRPRGKKRYKLKHIVWASRELER) form an interaction with host CALM1 region. An interaction with host AP3D1 region spans residues 12-19 (KLDKWEKI). Residues 14-33 (DKWEKIRLRPRGKKRYKLKH) are interaction with membrane phosphatidylinositol 4,5-bisphosphate and RNA. The Nuclear export signal motif lies at 16-22 (WEKIRLR). The short motif at 26–32 (KKRYKLK) is the Nuclear localization signal element. An interaction with membrane phosphatidylinositol 4,5-bisphosphate region spans residues 73–77 (EELKS). The tract at residues 106-128 (EEQNKSKKKAQQAAADTGNGSQV) is disordered. Tyrosine 132 is modified (phosphotyrosine; by host). The interval 189 to 227 (NTVGGHQAAMQMLKETINEEAAEWDRLHPVHAGPIAPGQ) is interaction with human PPIA/CYPA and NUP153. The interval 277–363 (YSPISILDIR…GGPSHKARIL (87 aa)) is dimerization/Multimerization of capsid protein p24. 2 CCHC-type zinc fingers span residues 390 to 407 (VKCF…NCRA) and 411 to 428 (KGCW…DCTN). A disordered region spans residues 446–465 (KARELSSEQTRANSPTRREL). The dimerization of protease stretch occupies residues 490–494 (PQITL). Residues 509 to 578 (KEALLDTGAD…TPVNIIGRNL (70 aa)) enclose the Peptidase A2 domain. Residue aspartate 514 is the For protease activity; shared with dimeric partner of the active site. Dimerization of protease stretches follow at residues 538–544 (GIGGFIK) and 577–589 (NLLT…LNFP). Residues 632-822 (EGKISKIGPE…PPFLWMGYEL (191 aa)) enclose the Reverse transcriptase domain. Mg(2+) contacts are provided by aspartate 698, aspartate 773, and aspartate 774. Residues 815 to 823 (FLWMGYELH) form an RT 'primer grip' region. The Tryptophan repeat motif signature appears at 986–1002 (WEAWWTEYWQATWIPEW). The RNase H type-1 domain maps to 1022–1145 (IIGAETFYVD…VDRLVSTGIR (124 aa)). Aspartate 1031, glutamate 1066, aspartate 1086, and aspartate 1137 together coordinate Mg(2+). The Integrase-type zinc-finger motif lies at 1151–1192 (DGIDKAQDEHEKYHSNWRAMASDFNLPPVVAKEIVASCDKCQ). The Zn(2+) site is built by histidine 1160, histidine 1164, cysteine 1188, and cysteine 1191. Residues 1202-1352 (VDCSPGIWQL…SAGERIVDII (151 aa)) enclose the Integrase catalytic domain. Aspartate 1212, aspartate 1264, and glutamate 1300 together coordinate Mg(2+). A DNA-binding region (integrase-type) is located at residues 1371-1418 (FRVYYRDSRDPLWKGHAKLLWKGEGAVVIQDNSDIKVVPRRKAKIIRD).

As to quaternary structure, homotrimer; further assembles as hexamers of trimers. Interacts with gp41 (via C-terminus). Interacts with host CALM1; this interaction induces a conformational change in the Matrix protein, triggering exposure of the myristate group. Interacts with host AP3D1; this interaction allows the polyprotein trafficking to multivesicular bodies during virus assembly. Part of the pre-integration complex (PIC) which is composed of viral genome, matrix protein, Vpr and integrase. Homodimer; the homodimer further multimerizes as homohexamers or homopentamers. Interacts with human PPIA/CYPA; This interaction stabilizes the capsid. Interacts with human NUP153. Interacts with host PDZD8; this interaction stabilizes the capsid. Interacts with monkey TRIM5; this interaction destabilizes the capsid. In terms of assembly, homodimer, whose active site consists of two apposed aspartic acid residues. As to quaternary structure, heterodimer of p66 RT and p51 RT (RT p66/p51). Heterodimerization of RT is essential for DNA polymerase activity. The overall folding of the subdomains is similar in p66 RT and p51 RT but the spatial arrangements of the subdomains are dramatically different. Homotetramer; may further associate as a homohexadecamer. Part of the pre-integration complex (PIC) which is composed of viral genome, matrix protein, Vpr and integrase. Interacts with human SMARCB1/INI1 and human PSIP1/LEDGF isoform 1. Interacts with human KPNA3; this interaction might play a role in nuclear import of the pre-integration complex. Interacts with human NUP153; this interaction might play a role in nuclear import of the pre-integration complex. Mg(2+) is required as a cofactor. In terms of processing, specific enzymatic cleavages by the viral protease yield mature proteins. The protease is released by autocatalytic cleavage. The polyprotein is cleaved during and after budding, this process is termed maturation. Proteolytic cleavage of p66 RT removes the RNase H domain to yield the p51 RT subunit. Nucleocapsid protein p7 might be further cleaved after virus entry. Tyrosine phosphorylated presumably in the virion by a host kinase. Phosphorylation is apparently not a major regulator of membrane association. Post-translationally, phosphorylated possibly by host MAPK1; this phosphorylation is necessary for Pin1-mediated virion uncoating. In terms of processing, methylated by host PRMT6, impairing its function by reducing RNA annealing and the initiation of reverse transcription.

It is found in the host cell membrane. Its subcellular location is the host endosome. The protein resides in the host multivesicular body. It localises to the virion membrane. The protein localises to the host nucleus. It is found in the host cytoplasm. Its subcellular location is the virion. The enzyme catalyses Specific for a P1 residue that is hydrophobic, and P1' variable, but often Pro.. It catalyses the reaction Endohydrolysis of RNA in RNA/DNA hybrids. Three different cleavage modes: 1. sequence-specific internal cleavage of RNA. Human immunodeficiency virus type 1 and Moloney murine leukemia virus enzymes prefer to cleave the RNA strand one nucleotide away from the RNA-DNA junction. 2. RNA 5'-end directed cleavage 13-19 nucleotides from the RNA end. 3. DNA 3'-end directed cleavage 15-20 nucleotides away from the primer terminus.. The catalysed reaction is 3'-end directed exonucleolytic cleavage of viral RNA-DNA hybrid.. It carries out the reaction DNA(n) + a 2'-deoxyribonucleoside 5'-triphosphate = DNA(n+1) + diphosphate. Its activity is regulated as follows. Protease: The viral protease is inhibited by many synthetic protease inhibitors (PIs), such as amprenavir, atazanavir, indinavir, loprinavir, nelfinavir, ritonavir and saquinavir. Use of protease inhibitors in tritherapy regimens permit more ambitious therapeutic strategies. Reverse transcriptase/ribonuclease H: RT can be inhibited either by nucleoside RT inhibitors (NRTIs) or by non nucleoside RT inhibitors (NNRTIs). NRTIs act as chain terminators, whereas NNRTIs inhibit DNA polymerization by binding a small hydrophobic pocket near the RT active site and inducing an allosteric change in this region. Classical NRTIs are abacavir, adefovir (PMEA), didanosine (ddI), lamivudine (3TC), stavudine (d4T), tenofovir (PMPA), zalcitabine (ddC), and zidovudine (AZT). Classical NNRTIs are atevirdine (BHAP U-87201E), delavirdine, efavirenz (DMP-266), emivirine (I-EBU), and nevirapine (BI-RG-587). The tritherapies used as a basic effective treatment of AIDS associate two NRTIs and one NNRTI. Mediates, with Gag polyprotein, the essential events in virion assembly, including binding the plasma membrane, making the protein-protein interactions necessary to create spherical particles, recruiting the viral Env proteins, and packaging the genomic RNA via direct interactions with the RNA packaging sequence (Psi). Gag-Pol polyprotein may regulate its own translation, by the binding genomic RNA in the 5'-UTR. At low concentration, the polyprotein would promote translation, whereas at high concentration, the polyprotein would encapsidate genomic RNA and then shut off translation. Functionally, targets the polyprotein to the plasma membrane via a multipartite membrane-binding signal, that includes its myristoylated N-terminus. Matrix protein is part of the pre-integration complex. Implicated in the release from host cell mediated by Vpu. Binds to RNA. In terms of biological role, forms the conical core that encapsulates the genomic RNA-nucleocapsid complex in the virion. Most core are conical, with only 7% tubular. The core is constituted by capsid protein hexamer subunits. The core is disassembled soon after virion entry. Host restriction factors such as TRIM5-alpha or TRIMCyp bind retroviral capsids and cause premature capsid disassembly, leading to blocks in reverse transcription. Capsid restriction by TRIM5 is one of the factors which restricts HIV-1 to the human species. Host PIN1 apparently facilitates the virion uncoating. On the other hand, interactions with PDZD8 or CYPA stabilize the capsid. Its function is as follows. Encapsulates and protects viral dimeric unspliced genomic RNA (gRNA). Binds these RNAs through its zinc fingers. Acts as a nucleic acid chaperone which is involved in rearangement of nucleic acid secondary structure during gRNA retrotranscription. Also facilitates template switch leading to recombination. As part of the polyprotein, participates in gRNA dimerization, packaging, tRNA incorporation and virion assembly. Aspartyl protease that mediates proteolytic cleavages of Gag and Gag-Pol polyproteins during or shortly after the release of the virion from the plasma membrane. Cleavages take place as an ordered, step-wise cascade to yield mature proteins. This process is called maturation. Displays maximal activity during the budding process just prior to particle release from the cell. Also cleaves Nef and Vif, probably concomitantly with viral structural proteins on maturation of virus particles. Hydrolyzes host EIF4GI and PABP1 in order to shut off the capped cellular mRNA translation. The resulting inhibition of cellular protein synthesis serves to ensure maximal viral gene expression and to evade host immune response. Also mediates cleavage of host YTHDF3. Mediates cleavage of host CARD8, thereby activating the CARD8 inflammasome, leading to the clearance of latent HIV-1 in patient CD4(+) T-cells after viral reactivation; in contrast, HIV-1 can evade CARD8-sensing when its protease remains inactive in infected cells prior to viral budding. Functionally, multifunctional enzyme that converts the viral RNA genome into dsDNA in the cytoplasm, shortly after virus entry into the cell. This enzyme displays a DNA polymerase activity that can copy either DNA or RNA templates, and a ribonuclease H (RNase H) activity that cleaves the RNA strand of RNA-DNA heteroduplexes in a partially processive 3' to 5' endonucleasic mode. Conversion of viral genomic RNA into dsDNA requires many steps. A tRNA(3)-Lys binds to the primer-binding site (PBS) situated at the 5'-end of the viral RNA. RT uses the 3' end of the tRNA primer to perform a short round of RNA-dependent minus-strand DNA synthesis. The reading proceeds through the U5 region and ends after the repeated (R) region which is present at both ends of viral RNA. The portion of the RNA-DNA heteroduplex is digested by the RNase H, resulting in a ssDNA product attached to the tRNA primer. This ssDNA/tRNA hybridizes with the identical R region situated at the 3' end of viral RNA. This template exchange, known as minus-strand DNA strong stop transfer, can be either intra- or intermolecular. RT uses the 3' end of this newly synthesized short ssDNA to perform the RNA-dependent minus-strand DNA synthesis of the whole template. RNase H digests the RNA template except for two polypurine tracts (PPTs) situated at the 5'-end and near the center of the genome. It is not clear if both polymerase and RNase H activities are simultaneous. RNase H probably can proceed both in a polymerase-dependent (RNA cut into small fragments by the same RT performing DNA synthesis) and a polymerase-independent mode (cleavage of remaining RNA fragments by free RTs). Secondly, RT performs DNA-directed plus-strand DNA synthesis using the PPTs that have not been removed by RNase H as primers. PPTs and tRNA primers are then removed by RNase H. The 3' and 5' ssDNA PBS regions hybridize to form a circular dsDNA intermediate. Strand displacement synthesis by RT to the PBS and PPT ends produces a blunt ended, linear dsDNA copy of the viral genome that includes long terminal repeats (LTRs) at both ends. In terms of biological role, catalyzes viral DNA integration into the host chromosome, by performing a series of DNA cutting and joining reactions. This enzyme activity takes place after virion entry into a cell and reverse transcription of the RNA genome in dsDNA. The first step in the integration process is 3' processing. This step requires a complex comprising the viral genome, matrix protein, Vpr and integrase. This complex is called the pre-integration complex (PIC). The integrase protein removes 2 nucleotides from each 3' end of the viral DNA, leaving recessed CA OH's at the 3' ends. In the second step, the PIC enters cell nucleus. This process is mediated through integrase and Vpr proteins, and allows the virus to infect a non dividing cell. This ability to enter the nucleus is specific of lentiviruses, other retroviruses cannot and rely on cell division to access cell chromosomes. In the third step, termed strand transfer, the integrase protein joins the previously processed 3' ends to the 5' ends of strands of target cellular DNA at the site of integration. The 5'-ends are produced by integrase-catalyzed staggered cuts, 5 bp apart. A Y-shaped, gapped, recombination intermediate results, with the 5'-ends of the viral DNA strands and the 3' ends of target DNA strands remaining unjoined, flanking a gap of 5 bp. The last step is viral DNA integration into host chromosome. This involves host DNA repair synthesis in which the 5 bp gaps between the unjoined strands are filled in and then ligated. Since this process occurs at both cuts flanking the HIV genome, a 5 bp duplication of host DNA is produced at the ends of HIV-1 integration. Alternatively, Integrase may catalyze the excision of viral DNA just after strand transfer, this is termed disintegration. In Human immunodeficiency virus type 1 group M subtype B (isolate RF/HAT3) (HIV-1), this protein is Gag-Pol polyprotein (gag-pol).